A 189-amino-acid chain; its full sequence is Cell division protein SepF (189 aa).

Residues 25 to 70 are disordered; the sequence is ESRVQQQAVKPSNSRPAQQEPVRDIKQPRLVSSSSQHVTNTPSSNE. 2 stretches are compositionally biased toward polar residues: residues 27 to 41 and 54 to 70; these read RVQQQAVKPSNSRPA and LVSSSSQHVTNTPSSNE.

This sequence belongs to the SepF family. In terms of assembly, homodimer. Interacts with FtsZ.

It is found in the cytoplasm. In terms of biological role, cell division protein that is part of the divisome complex and is recruited early to the Z-ring. Probably stimulates Z-ring formation, perhaps through the cross-linking of FtsZ protofilaments. Its function overlaps with FtsA. This is Cell division protein SepF from Streptococcus gordonii (strain Challis / ATCC 35105 / BCRC 15272 / CH1 / DL1 / V288).